The chain runs to 396 residues: S-adenosylmethionine synthase 2 (396 aa).

Glu13 is a Mg(2+) binding site. His19 is a binding site for ATP. Glu47 lines the K(+) pocket. L-methionine-binding residues include Glu60 and Gln103. ATP contacts are provided by residues Asp171–Lys173, Ser239–Phe242, Asp250, Arg256–Lys257, Ala273, Lys277, and Lys281. Asp250 is a binding site for L-methionine. Lys281 contacts L-methionine.

It belongs to the AdoMet synthase family. In terms of assembly, homotetramer. The cofactor is Mn(2+). It depends on Mg(2+) as a cofactor. Co(2+) serves as cofactor. Requires K(+) as cofactor.

The protein resides in the cytoplasm. The enzyme catalyses L-methionine + ATP + H2O = S-adenosyl-L-methionine + phosphate + diphosphate. It functions in the pathway amino-acid biosynthesis; S-adenosyl-L-methionine biosynthesis; S-adenosyl-L-methionine from L-methionine: step 1/1. In terms of biological role, catalyzes the formation of S-adenosylmethionine from methionine and ATP. The reaction comprises two steps that are both catalyzed by the same enzyme: formation of S-adenosylmethionine (AdoMet) and triphosphate, and subsequent hydrolysis of the triphosphate. The polypeptide is S-adenosylmethionine synthase 2 (SAM2) (Dianthus caryophyllus (Carnation)).